We begin with the raw amino-acid sequence, 557 residues long: Hepatocyte nuclear factor 1-beta (557 aa).

The tract at residues 1 to 31 (MVSKLTSLQQELLSALLSSGVTKEVLVQALE) is dimerization. One can recognise an HNF-p1 domain in the interval 1–32 (MVSKLTSLQQELLSALLSSGVTKEVLVQALEE). Phosphoserine is present on residues Ser49, Ser52, Ser75, and Ser80. Residues 64–85 (TLTNGHAKGRLSGDEGSEDGDD) form a disordered region. Residues 93–188 (KELQALNTEE…ILRQFNQTVQ (96 aa)) form the POU-specific atypical domain. The segment at residues 231-311 (MRRNRFKWGP…NRRKEEAFRQ (81 aa)) is a DNA-binding region (homeobox; HNF1-type). Residues 324–352 (HSLNPLLSHGSPHHQPSSSPPNKLSGVRY) form a disordered region. Positions 328 to 344 (PLLSHGSPHHQPSSSPP) are enriched in low complexity.

It belongs to the HNF1 homeobox family. Binds DNA as a dimer. Can form homodimer or heterodimer with HNF1-alpha. Interacts (via HNF-p1 domain) with PCBD1; the interaction increases its transactivation activity.

It localises to the nucleus. Functionally, transcription factor that binds to the inverted palindrome 5'-GTTAATNATTAAC-3'. Binds to the FPC element in the cAMP regulatory unit of the PLAU gene. Transcriptional activity is increased by coactivator PCBD1. This chain is Hepatocyte nuclear factor 1-beta (HNF1B), found in Homo sapiens (Human).